We begin with the raw amino-acid sequence, 385 residues long: uncharacterized protein (385 aa).

It belongs to the peptidase M20 family.

This is an uncharacterized protein from Staphylococcus saprophyticus subsp. saprophyticus (strain ATCC 15305 / DSM 20229 / NCIMB 8711 / NCTC 7292 / S-41).